The chain runs to 451 residues: Tubulin alpha chain (451 aa).

Residue glutamine 11 coordinates GTP. Lysine 40 is subject to N6-acetyllysine. Positions 71, 144, 145, 179, 206, and 228 each coordinate GTP. Glutamate 71 serves as a coordination point for Mg(2+). The active site involves glutamate 254.

This sequence belongs to the tubulin family. Dimer of alpha and beta chains. A typical microtubule is a hollow water-filled tube with an outer diameter of 25 nm and an inner diameter of 15 nM. Alpha-beta heterodimers associate head-to-tail to form protofilaments running lengthwise along the microtubule wall with the beta-tubulin subunit facing the microtubule plus end conferring a structural polarity. Microtubules usually have 13 protofilaments but different protofilament numbers can be found in some organisms and specialized cells. Requires Mg(2+) as cofactor. In terms of processing, undergoes a tyrosination/detyrosination cycle, the cyclic removal and re-addition of a C-terminal tyrosine residue by the enzymes tubulin tyrosine carboxypeptidase (TTCP) and tubulin tyrosine ligase (TTL), respectively. Post-translationally, acetylation of alpha chains at Lys-40 stabilizes microtubules and affects affinity and processivity of microtubule motors. This modification has a role in multiple cellular functions, ranging from cell motility, cell cycle progression or cell differentiation to intracellular trafficking and signaling.

It is found in the cytoplasm. The protein localises to the cytoskeleton. It catalyses the reaction GTP + H2O = GDP + phosphate + H(+). Tubulin is the major constituent of microtubules, a cylinder consisting of laterally associated linear protofilaments composed of alpha- and beta-tubulin heterodimers. Microtubules grow by the addition of GTP-tubulin dimers to the microtubule end, where a stabilizing cap forms. Below the cap, tubulin dimers are in GDP-bound state, owing to GTPase activity of alpha-tubulin. This chain is Tubulin alpha chain, found in Trypanosoma cruzi.